The chain runs to 1226 residues: 3-hydroxy-3-methylglutaryl-coenzyme A reductase (1226 aa).

5 helical membrane-spanning segments follow: residues 17–37 (IETIVSVFVLATLAYFHILSG), 224–244 (ILVVLTGYILMHVTFMRLFLA), 252–272 (FWLSAGIFSSATISFLFTLPM), 337–357 (VGNMILRDYALEIAVLFVGVN), and 373–393 (LLAMDRLMTFTLYTAVLTIMV). Residues 223-391 (DILVVLTGYI…FTLYTAVLTI (169 aa)) form the SSD domain. The tract at residues 428 to 449 (LSRKSSKQSVTEPETTKNLRQR) is disordered. The span at 434 to 445 (KQSVTEPETTKN) shows a compositional bias: polar residues. A helical membrane pass occupies residues 481–501 (LLLIASFLTLHILNFCTTLTS). Disordered regions lie at residues 683–702 (APAPAPAPEPEPPVNRPPPL) and 722–742 (LPIRSPPPVEPITPESREVEP). Over residues 685 to 702 (APAPAPEPEPPVNRPPPL) the composition is skewed to pro residues. Residue E869 is the Charge relay system of the active site. 875–881 (STSRGCK) is a binding site for CoA. NADP(+) is bound by residues 936–938 (SRF) and 963–971 (DAMGMNMIS). The active-site Charge relay system is K1001. Residue 1030 to 1032 (VLK) coordinates CoA. D1077 serves as the catalytic Charge relay system. A helical membrane pass occupies residues 1150–1170 (IIASAVMAGELSLISALAAGH). 1174 to 1175 (AH) provides a ligand contact to CoA. Catalysis depends on H1175, which acts as the Proton donor. Residue 1179 to 1180 (NR) coordinates NADP(+). The segment at 1182–1226 (QLNTPMPSRPHTPGPEDVSHVQQLPTPSASDDKGVTAQGYVVEAK) is disordered. Residues 1201–1210 (HVQQLPTPSA) are compositionally biased toward polar residues.

It belongs to the HMG-CoA reductase family.

The protein localises to the endoplasmic reticulum membrane. It carries out the reaction (R)-mevalonate + 2 NADP(+) + CoA = (3S)-3-hydroxy-3-methylglutaryl-CoA + 2 NADPH + 2 H(+). The protein operates within metabolic intermediate biosynthesis; (R)-mevalonate biosynthesis; (R)-mevalonate from acetyl-CoA: step 3/3. HMG-CoA reductase; part of the first module of ergosterol biosynthesis pathway that includes the early steps of the pathway, conserved across all eukaryotes, and which results in the formation of mevalonate from acetyl-coenzyme A (acetyl-CoA). This module also plays a key role in the biosynthesis of triterpenes such as ganoderic acids (GA), a group of highly oxygenated lanostane-type triterpenoids which are well recognized as a main group of unique bioactive compounds in the medicinal mushroom Ganoderma lucidum. In this module, the acetyl-CoA acetyltransferase catalyzes the formation of acetoacetyl-CoA. The hydroxymethylglutaryl-CoA synthase HMGS then condenses acetyl-CoA with acetoacetyl-CoA to form HMG-CoA. The rate-limiting step of the early module is the reduction to mevalonate by the 3-hydroxy-3-methylglutaryl-coenzyme A (HMG-CoA) reductase. This is 3-hydroxy-3-methylglutaryl-coenzyme A reductase from Ganoderma lucidum (Ling zhi medicinal fungus).